We begin with the raw amino-acid sequence, 173 residues long: Large ribosomal subunit protein uL16 (173 aa).

It belongs to the universal ribosomal protein uL16 family.

This Methanococcus maripaludis (strain C6 / ATCC BAA-1332) protein is Large ribosomal subunit protein uL16.